The chain runs to 94 residues: Aspartyl/glutamyl-tRNA(Asn/Gln) amidotransferase subunit C (94 aa).

The protein belongs to the GatC family. Heterotrimer of A, B and C subunits.

It catalyses the reaction L-glutamyl-tRNA(Gln) + L-glutamine + ATP + H2O = L-glutaminyl-tRNA(Gln) + L-glutamate + ADP + phosphate + H(+). It carries out the reaction L-aspartyl-tRNA(Asn) + L-glutamine + ATP + H2O = L-asparaginyl-tRNA(Asn) + L-glutamate + ADP + phosphate + 2 H(+). Allows the formation of correctly charged Asn-tRNA(Asn) or Gln-tRNA(Gln) through the transamidation of misacylated Asp-tRNA(Asn) or Glu-tRNA(Gln) in organisms which lack either or both of asparaginyl-tRNA or glutaminyl-tRNA synthetases. The reaction takes place in the presence of glutamine and ATP through an activated phospho-Asp-tRNA(Asn) or phospho-Glu-tRNA(Gln). This is Aspartyl/glutamyl-tRNA(Asn/Gln) amidotransferase subunit C from Heliobacterium modesticaldum (strain ATCC 51547 / Ice1).